The sequence spans 260 residues: Receptor-recognizing protein gp38 (260 aa).

Short sequence motifs (GRM) lie at residues 116 to 123, 125 to 132, 152 to 160, 162 to 173, 176 to 182, 185 to 191, 194 to 204, 210 to 216, 219 to 224, and 228 to 240; these read GRGGNGGS, AAGAAGGN, GGGGGGGGG, RGKLIFGGGGGR, GAGGSSS, SSGATAG, SAPGKGSVGEG, TGGAGGN, AAGGRC, and GNGTEYNGGAAGK. The tract at residues 176 to 197 is disordered; it reads GAGGSSSHMSSGATAGTISAPG. Over residues 180–191 the composition is skewed to low complexity; the sequence is SSSHMSSGATAG.

It belongs to the receptor-recognizing protein gp38 family.

It is found in the virion. Functionally, receptor binding protein (RBP) that is at the tip of the long tail fibers and serves as the phage recognition site for the attachment host receptor OmpA. This Escherichia coli (Bacteriophage K3) protein is Receptor-recognizing protein gp38 (38).